A 190-amino-acid polypeptide reads, in one-letter code: MEHNTNMLPLENASILSEGSLQDGHRLWIGNVDPKITEYHLLKLLQKFGKVKQFDFLFHKSGPLEGQPRGYCFVNFETKAEAERAIHCLNGKMALSKKLVVRWAHAQIKRYDNCKNEKVLPISLEPSSSTEPTQSTLSVSAKIKAIEAKLKMMAENPDPLLPGQSSYSYFKANEKKKCTPYHKSSLKSKR.

The region spanning 25–106 (HRLWIGNVDP…KKLVVRWAHA (82 aa)) is the RRM domain.

The polypeptide is Probable RNA-binding protein 18 (rbm18) (Xenopus laevis (African clawed frog)).